A 719-amino-acid chain; its full sequence is Leucine-rich repeat and fibronectin type-III domain-containing protein 5 (719 aa).

The signal sequence occupies residues 1–17; the sequence is MEKFLFYLFLIGIAVRA. Residues 18-51 enclose the LRRNT domain; sequence QICPKRCVCQILSPNLATLCAKKGLLFVPPNIDR. The Extracellular segment spans residues 18–529; the sequence is QICPKRCVCQ…MQSQFLGGTM (512 aa). LRR repeat units lie at residues 52 to 73, 76 to 97, 100 to 121, 124 to 145, 148 to 169, 172 to 193, and 196 to 217; these read RTVE…DFAN, SLVD…AFAD, NLRA…MFSG, NLHH…AFDD, ALEE…AVEK, SLHT…TFSH, and KMTR…PLFQ. Asparagine 73 is a glycosylation site (N-linked (GlcNAc...) asparagine). The 47-residue stretch at 240–286 folds into the LRRCT domain; it reads NPLHCNCELLWLRRLSREDDLETCASPALLTGRYFWSIPEEEFLCEP. Positions 287-373 constitute an Ig-like domain; that stretch reads PLITRHTHEM…GEATQTVDLH (87 aa). Residues cysteine 308 and cysteine 357 are joined by a disulfide bond. N-linked (GlcNAc...) asparagine glycosylation is found at asparagine 330, asparagine 339, asparagine 382, asparagine 406, and asparagine 452. The tract at residues 385-416 is disordered; that stretch reads NHIHEPDPGSSDISTSTKSGSNASSSNGDTKM. Residues 393–412 show a composition bias toward low complexity; that stretch reads GSSDISTSTKSGSNASSSNG. Residues 414 to 503 enclose the Fibronectin type-III domain; sequence TKMSQDKIVV…ITSLTATRVV (90 aa). Residues 530-550 form a helical membrane-spanning segment; sequence IIIIGGIIVASVLVFIIILMI. Residues 551–719 are Cytoplasmic-facing; it reads RYKVCNNNGQ…VQETQRLESI (169 aa). Residues 614 to 627 show a composition bias toward low complexity; it reads SETCSSQDSSTTTS. A disordered region spans residues 614 to 719; it reads SETCSSQDSS…VQETQRLESI (106 aa). Composition is skewed to polar residues over residues 628 to 641, 654 to 677, and 702 to 713; these read ALPP…PVSQ, EPQS…TALQ, and LLTNVDQNVQET.

The protein belongs to the LRFN family. Can form heteromeric complexes with LRFN1, LRFN2, LRFN3 and LFRN4. Able to form homomeric complexes across cell junctions, between adjacent cells. Does not interact with DLG1, DLG2 or DLG3. Does not interact with DLG4. Post-translationally, glycosylated. Predominantly expressed in the brain, with a weak, but broad expression in the cerebral cortex and diencephalic nuclei. Strongly expressed in both the pyramidal layer and the dentate gyrus of the hippocampus. Also detected in other parts of the central nervous system, including the olfactory bulb, pons, cerebellum, and medulla oblongata, as well as in the peripheral nervous system, such as the ganglia of cranial nerves and the dorsal root ganglion during gestation.

Its subcellular location is the membrane. Functionally, cell adhesion molecule that mediates homophilic cell-cell adhesion in a Ca(2+)-independent manner. Promotes neurite outgrowth in hippocampal neurons. In Mus musculus (Mouse), this protein is Leucine-rich repeat and fibronectin type-III domain-containing protein 5 (Lrfn5).